A 235-amino-acid chain; its full sequence is Secretory carrier-associated membrane protein 5 (235 aa).

At 1-39 the chain is on the cytoplasmic side; the sequence is MAEKVNNFPPLPKFIPLKPCFYQDFEADIPPQHVSMTKR. A helical transmembrane segment spans residues 40–60; it reads LYYLWMLNSVTLAVNLVGCLA. The Extracellular segment spans residues 61 to 67; the sequence is WLIGGGG. The chain crosses the membrane as a helical span at residues 68–88; it reads ATNFGLAFLWLILFTPCSYVC. The Cytoplasmic segment spans residues 89–102; sequence WFRPIYKAFKTDSS. The chain crosses the membrane as a helical span at residues 103–125; it reads FSFMAFFFTFMAQLVISIIQAVG. At 126 to 148 the chain is on the extracellular side; that stretch reads IPGWGVCGWIATISFFGTNIGSA. The chain crosses the membrane as a helical span at residues 149-169; that stretch reads VVMLIPTVMFTVMAVFSFIAL. Residues 170-235 lie on the Cytoplasmic side of the membrane; it reads SMVHKFYRGS…TPNYTYSNEM (66 aa).

The protein belongs to the SCAMP family. SCAMP5 subfamily. In terms of assembly, interacts (via C-terminal part) with SYT1 and SYT2; interaction with synaptotagmins making a link with the SNARE molecules. Interacts with SLC9A7. Expressed both by neuronal and non-neuronal tissues. Expressed in brain, stomach, thyroid, spinal cord, lymph node, trachea, adrenal gland, bone marrow and in the different parts of brain. In thyroid tissues, it is expressed by the follicular epithelial cells. In the adrenal gland tissues it is detected in the zona fasciculata of the cortex region (at protein level).

The protein resides in the cell membrane. Its subcellular location is the golgi apparatus membrane. It localises to the golgi apparatus. The protein localises to the trans-Golgi network membrane. It is found in the recycling endosome membrane. The protein resides in the cytoplasmic vesicle. Its subcellular location is the secretory vesicle. It localises to the synaptic vesicle membrane. In terms of biological role, required for the calcium-dependent exocytosis of signal sequence-containing cytokines such as CCL5. Probably acts in cooperation with the SNARE machinery. May play a role in accumulation of expanded polyglutamine (polyQ) protein huntingtin (HTT) in case of endoplasmic reticulum stress by inhibiting the endocytosis pathway. In Homo sapiens (Human), this protein is Secretory carrier-associated membrane protein 5 (SCAMP5).